Reading from the N-terminus, the 315-residue chain is Homoserine kinase (315 aa).

97–107 (PPARGLGSSAT) serves as a coordination point for ATP.

It belongs to the GHMP kinase family. Homoserine kinase subfamily.

The protein localises to the cytoplasm. The catalysed reaction is L-homoserine + ATP = O-phospho-L-homoserine + ADP + H(+). Its pathway is amino-acid biosynthesis; L-threonine biosynthesis; L-threonine from L-aspartate: step 4/5. Its function is as follows. Catalyzes the ATP-dependent phosphorylation of L-homoserine to L-homoserine phosphate. The polypeptide is Homoserine kinase (Synechococcus sp. (strain WH7803)).